The sequence spans 86 residues: Small ribosomal subunit protein uS15 (86 aa).

Belongs to the universal ribosomal protein uS15 family. Part of the 30S ribosomal subunit. Forms a bridge to the 50S subunit in the 70S ribosome, contacting the 23S rRNA.

In terms of biological role, one of the primary rRNA binding proteins, it binds directly to 16S rRNA where it helps nucleate assembly of the platform of the 30S subunit by binding and bridging several RNA helices of the 16S rRNA. Forms an intersubunit bridge (bridge B4) with the 23S rRNA of the 50S subunit in the ribosome. This is Small ribosomal subunit protein uS15 from Vesicomyosocius okutanii subsp. Calyptogena okutanii (strain HA).